We begin with the raw amino-acid sequence, 151 residues long: Small ribosomal subunit protein uS15 (151 aa).

It belongs to the universal ribosomal protein uS15 family.

This is Small ribosomal subunit protein uS15 (RPS13) from Zea mays (Maize).